The chain runs to 349 residues: Dihydroorotate dehydrogenase (quinone) (349 aa).

FMN-binding positions include P59–K63 and T83. K63 is a binding site for substrate. Residue N108 to F112 participates in substrate binding. 2 residues coordinate FMN: N142 and N173. N173 lines the substrate pocket. Catalysis depends on S176, which acts as the Nucleophile. N178 provides a ligand contact to substrate. Positions 212 and 240 each coordinate FMN. N241–T242 is a binding site for substrate. FMN-binding positions include G262, G291, and Y312 to S313.

The protein belongs to the dihydroorotate dehydrogenase family. Type 2 subfamily. In terms of assembly, monomer. FMN serves as cofactor.

The protein resides in the cell membrane. The enzyme catalyses (S)-dihydroorotate + a quinone = orotate + a quinol. It participates in pyrimidine metabolism; UMP biosynthesis via de novo pathway; orotate from (S)-dihydroorotate (quinone route): step 1/1. Functionally, catalyzes the conversion of dihydroorotate to orotate with quinone as electron acceptor. In Novosphingobium aromaticivorans (strain ATCC 700278 / DSM 12444 / CCUG 56034 / CIP 105152 / NBRC 16084 / F199), this protein is Dihydroorotate dehydrogenase (quinone).